Here is a 159-residue protein sequence, read N- to C-terminus: Immunoglobulin J chain (159 aa).

Positions 1–22 (MKNHLLFWGVLAVFIKAVHVKA) are cleaved as a signal peptide. A Pyrrolidone carboxylic acid modification is found at Gln-23. Disulfide bonds link Cys-35/Cys-123, Cys-94/Cys-114, and Cys-131/Cys-156. Residue Asn-71 is glycosylated (N-linked (GlcNAc...) (complex) asparagine).

In terms of assembly, part of the secretory IgA (sIgA) complex that consists of two, four or five IgA monomers, and two additional non-Ig polypeptides, namely the JCHAIN and the secretory component (the proteolytic product of PIGR). Part of the secretory IgM (sIgM) complex that consists of five IgM monomers, and two additional non-Ig polypeptides, namely the JCHAIN and the secretory component (the proteolytic product of PIGR). JCHAIN-containing IgM interacts (via CH4 domain) with FCRM (via Ig-like domain).

It is found in the secreted. Serves to link two monomer units of either IgM or IgA. In the case of IgM, the J chain-joined dimer is a nucleating unit for the IgM pentamer, and in the case of IgA it induces dimers and/or larger polymers. It also helps to bind these immunoglobulins to secretory component. In Homo sapiens (Human), this protein is Immunoglobulin J chain.